Consider the following 1535-residue polypeptide: MMLLPIFLLLCIGINLIRAESCPPSQAILPCRCSLRGKEIQIWCSHSNLPQIMDGLKAVERNIKGRIDELVLENNQLPALPGRFFGSLQIVRLMLRHNSIERVSNGWLNELENGLVEIFVVEPQLRSIPAESLNGMINMLAITIQSEELKHLPDFSGLLSLTYLSVQTGALQELPSHLFRHLPKLQHIHITGGSGLTRLEAGLFDGLISLKNLDLSHNGLNWIHLRALSRLPNLVSLKLSHNQISDVGMVGRIVKDLEHLKKLRLDNNLITVIEDGSFVDLPNLSELHLNDNRITELQYGAFLRTPQLKTIYLQNNLIRRIHPESLLQASGSGVEAVHMYNNEIGHVEALRALLDALPRLRYLDMSGNLLSELPYGALRGHGTLEQLHLNHNHLRLIERDALMAMPALRELRMRNNSLSSDLPLPFWNLPGLKGLDLAQNQFARVDSQLLAGLPSLRRLDLSENGLIELAPNSFRHNPLLETLNISSNELTKIHSSTLIHLERLFEVDASYNQLKSVIAGLPRIVERISLKGNQITSLPAAASKDLQLPNLRMLDLSQNRIEQLPRHGFQGAMELRVLSLAQNELRQLKDTSFIGIQRLELLHLQENQLGEADERALLPLAELRNLNLQSNKLEAITDNFFSNNSRLEQLDLSRNLIRSISPTAFDTQRSLEYLDLSGNALLDISVGLGNLNNLRDIDLSYNQISRIQSDVIGGWRNVVEIRLSNNLIVELQQGTFRNLPKLQYLDLSSNEIRNVEPGALKGLDELQEFVLADNKLVELKDHVFEELPSLLASHFQYNKLRYISPESFHNANSLVFLNLSNNHFRNMENIGLRSMRNLEVLDLSTNGVKLVSTMPLKALNWLVELKMDNNQICRIQGSPFETMPRLRVLSMRNNQLRSIKERTFRNVRGNIAILDVDGNPIDCNCEMQWLSVWLQETNFPYPGPKCQDGRLLRSARMERSLCVGADIYGNERTDGNQLPLLNEHGDVFQRDLPDDFNDECEAGEGTRLPGDRPLVGESEYFYDQYVDATEAPDTTHSAISTSQRPKPTPTINSNIDLNNTILHTKYFNRKPQPGSGSPFTFFGYPLPSVSLGRFFGFGDRGRKQRTDSNDDMPATHRMAHISLPSGRGKTRMYQPNSAEFEKYLKDQQKQEKLNIARNRYVDTDSTTSSMEDALSNESGSAATTVGVFRTTFREPSSIERGGFRPIVPAHVGGFMPVHDPQQRRGLVEVVNITGNPSEIVQGIGQRKFIPISTQARPKPTKSSGESSETATYEVTETTPDITTTTPLMQRIATSTTKASTTTTRSTTTTSTTQVTPAENNASSSTELDSQYDDEDLEAQSVTLLRPPPLVQTTTAETILLIPPAEEHVAQIKSRSWVTTTTPQSPSDNQVTLAGPTSTVPPPPPASPPLRGGGRSTITKVYTPYQQQVAQPTAEEYQRTTPSGDNEGVASEHQLTANAQKRTELELLQVDRVDRKDGMDWYYESFKKKRDFNGGAAVRKTAHKEVFYDGVAASSSWNRLHKEILFISLLLLWRAC.

A signal peptide spans 1-19; that stretch reads MMLLPIFLLLCIGINLIRA. 34 LRR repeats span residues 64–87, 89–110, 112–135, 136–157, 158–181, 183–206, 207–230, 231–256, 257–280, 281–304, 306–328, 331–356, 357–380, 382–404, 406–429, 430–452, 453–476, 478–500, 521–545, 548–571, 573–595, 597–619, 620–643, 645–667, 669–691, 692–714, 716–738, 739–762, 764–786, 788–810, 811–834, 835–858, 860–882, and 883–906; these read KGRIDELVLENNQLPALPGRFFGS, QIVRLMLRHNSIERVSNGWLNE, ENGLVEIFVVEPQLRSIPAESLNG, MINMLAITIQSEELKHLPDFSG, LLSLTYLSVQTGALQELPSHLFRH, PKLQHIHITGGSGLTRLEAGLFDG, LISLKNLDLSHNGLNWIHLRALSR, LPNLVSLKLSHNQISDVGMVGRIVKD, LEHLKKLRLDNNLITVIEDGSFVD, LPNLSELHLNDNRITELQYGAFLR, PQLKTIYLQNNLIRRIHPESLLQ, GSGVEAVHMYNNEIGHVEALRALLDA, LPRLRYLDMSGNLLSELPYGALRG, GTLEQLHLNHNHLRLIERDALMA, PALRELRMRNNSLSSDLPLPFWNL, PGLKGLDLAQNQFARVDSQLLAG, LPSLRRLDLSENGLIELAPNSFRH, PLLETLNISSNELTKIHSSTLIH, LPRIVERISLKGNQITSLPAAASKD, LPNLRMLDLSQNRIEQLPRHGFQG, MELRVLSLAQNELRQLKDTSFIG, QRLELLHLQENQLGEADERALLP, LAELRNLNLQSNKLEAITDNFFSN, SRLEQLDLSRNLIRSISPTAFDT, RSLEYLDLSGNALLDISVGLGNL, NNLRDIDLSYNQISRIQSDVIGG, RNVVEIRLSNNLIVELQQGTFRN, LPKLQYLDLSSNEIRNVEPGALKG, DELQEFVLADNKLVELKDHVFEE, PSLLASHFQYNKLRYISPESFHN, ANSLVFLNLSNNHFRNMENIGLRS, MRNLEVLDLSTNGVKLVSTMPLKA, NWLVELKMDNNQICRIQGSPFET, and MPRLRVLSMRNNQLRSIKERTFRN. Residues 919–963 form the LRRCT domain; the sequence is NPIDCNCEMQWLSVWLQETNFPYPGPKCQDGRLLRSARMERSLCV. Disordered stretches follow at residues 1036 to 1055, 1253 to 1331, 1377 to 1416, and 1429 to 1449; these read HSAISTSQRPKPTPTINSNI, TQAR…DSQY, VTTTTPQSPSDNQVTLAGPTSTVPPPPPASPPLRGGGRST, and AQPTAEEYQRTTPSGDNEGVA. Residues 1253 to 1270 show a composition bias toward polar residues; it reads TQARPKPTKSSGESSETA. 2 stretches are compositionally biased toward low complexity: residues 1271 to 1285 and 1293 to 1315; these read TYEVTETTPDITTTT and TSTTKASTTTTRSTTTTSTTQVT. 2 stretches are compositionally biased toward polar residues: residues 1316 to 1328 and 1377 to 1391; these read PAENNASSSTELD and VTTTTPQSPSDNQVT. A compositionally biased stretch (pro residues) spans 1398 to 1407; the sequence is TVPPPPPASP.

Its subcellular location is the secreted. It localises to the extracellular space. It is found in the extracellular matrix. The protein localises to the cytoplasm. Its function is as follows. Required for normal morphology and function of ciliated sensory organs. The protein is Protein artichoke of Drosophila melanogaster (Fruit fly).